A 122-amino-acid chain; its full sequence is Probable DNA-directed RNA polymerase II subunit RPB11 (122 aa).

This sequence belongs to the archaeal Rpo11/eukaryotic RPB11/RPC19 RNA polymerase subunit family. As to quaternary structure, component of the RNA polymerase II (Pol II) complex consisting of 12 subunits.

It localises to the nucleus. In terms of biological role, DNA-dependent RNA polymerase catalyzes the transcription of DNA into RNA using the four ribonucleoside triphosphates as substrates. Component of RNA polymerase II which synthesizes mRNA precursors and many functional non-coding RNAs. Pol II is the central component of the basal RNA polymerase II transcription machinery. It is composed of mobile elements that move relative to each other. RPB11 is part of the core element with the central large cleft. The sequence is that of Probable DNA-directed RNA polymerase II subunit RPB11 (rpb-11) from Caenorhabditis elegans.